A 54-amino-acid polypeptide reads, in one-letter code: Rubredoxin-1 (54 aa).

Residues methionine 1–valine 52 enclose the Rubredoxin-like domain. Fe cation contacts are provided by cysteine 6, cysteine 9, cysteine 39, and cysteine 42.

It belongs to the rubredoxin family. Requires Fe(3+) as cofactor.

It is found in the cytoplasm. The protein operates within hydrocarbon metabolism; alkane degradation. Functionally, involved in the hydrocarbon hydroxylating system, which transfers electrons from NADH to rubredoxin reductase and then through rubredoxin to alkane 1 monooxygenase. This chain is Rubredoxin-1 (rubA), found in Alcanivorax borkumensis (strain ATCC 700651 / DSM 11573 / NCIMB 13689 / SK2).